The sequence spans 523 residues: Katanin p60 ATPase-containing subunit A1 (523 aa).

Positions 82 to 215 are disordered; it reads KEAPTGRRAA…DGKSKRGLYE (134 aa). A compositionally biased stretch (low complexity) spans 178 to 194; it reads AGARSSTAGKKGAASKS. 279-286 is a binding site for ATP; it reads GPPGTGKT.

Belongs to the AAA ATPase family. Katanin p60 subunit A1 subfamily. As to quaternary structure, may homooligomerize. Component of KTN80-KTN1 complexes composed of a hexamer of KTN1-KTN80 heterodimers that sense microtubule (MT) geometry to confer precise MT severing. Interacts directly with KTN80.1, KTN80.2, KTN80.3 and KTN80.4. Can interact with KTN80.1. May interact with the kinesin related protein KIN14A. Interacts with microtubule polymers. Binds to IPGA1. In terms of tissue distribution, expressed ubiquitously, including siliques, flowers, leaves, stems and roots.

It localises to the cytoplasm. Its subcellular location is the cytoskeleton. The enzyme catalyses n ATP + n H2O + a microtubule = n ADP + n phosphate + (n+1) alpha/beta tubulin heterodimers.. Its function is as follows. Severs microtubules in vitro in an ATP-dependent manner. Required for oligomerization of functional KTN80-KTN1 complexes that catalyze microtubule severing. This activity may promote rapid reorganization of cellular microtubule arrays. May be required for reorientation of cortical microtubule arrays during cellular elongation. Failure to correctly orient these arrays drastically compromises fiber length, cell wall thickness and mechanical strength. May also be required for the spatial organization of developmental cues within the root. Involved in the IPGA1- and AN-dependent regulation of pavement cells morphogenesis leading to puzzle shape. The sequence is that of Katanin p60 ATPase-containing subunit A1 from Arabidopsis thaliana (Mouse-ear cress).